The sequence spans 99 residues: Putative pterin-4-alpha-carbinolamine dehydratase (99 aa).

This sequence belongs to the pterin-4-alpha-carbinolamine dehydratase family.

The catalysed reaction is (4aS,6R)-4a-hydroxy-L-erythro-5,6,7,8-tetrahydrobiopterin = (6R)-L-erythro-6,7-dihydrobiopterin + H2O. The polypeptide is Putative pterin-4-alpha-carbinolamine dehydratase (Aquifex aeolicus (strain VF5)).